Here is a 153-residue protein sequence, read N- to C-terminus: NAD(P)H-quinone oxidoreductase subunit N (153 aa).

The protein belongs to the complex I NdhN subunit family. NDH-1 can be composed of about 15 different subunits; different subcomplexes with different compositions have been identified which probably have different functions.

It localises to the cellular thylakoid membrane. The catalysed reaction is a plastoquinone + NADH + (n+1) H(+)(in) = a plastoquinol + NAD(+) + n H(+)(out). It catalyses the reaction a plastoquinone + NADPH + (n+1) H(+)(in) = a plastoquinol + NADP(+) + n H(+)(out). NDH-1 shuttles electrons from an unknown electron donor, via FMN and iron-sulfur (Fe-S) centers, to quinones in the respiratory and/or the photosynthetic chain. The immediate electron acceptor for the enzyme in this species is believed to be plastoquinone. Couples the redox reaction to proton translocation, and thus conserves the redox energy in a proton gradient. Cyanobacterial NDH-1 also plays a role in inorganic carbon-concentration. The sequence is that of NAD(P)H-quinone oxidoreductase subunit N from Synechococcus sp. (strain RCC307).